The chain runs to 140 residues: Phosphoribosyl-AMP cyclohydrolase (140 aa).

Asp-78 serves as a coordination point for Mg(2+). Cys-79 contributes to the Zn(2+) binding site. Positions 80 and 82 each coordinate Mg(2+). Zn(2+) is bound by residues Cys-96 and Cys-103.

It belongs to the PRA-CH family. As to quaternary structure, homodimer. It depends on Mg(2+) as a cofactor. The cofactor is Zn(2+).

Its subcellular location is the cytoplasm. It catalyses the reaction 1-(5-phospho-beta-D-ribosyl)-5'-AMP + H2O = 1-(5-phospho-beta-D-ribosyl)-5-[(5-phospho-beta-D-ribosylamino)methylideneamino]imidazole-4-carboxamide. The protein operates within amino-acid biosynthesis; L-histidine biosynthesis; L-histidine from 5-phospho-alpha-D-ribose 1-diphosphate: step 3/9. In terms of biological role, catalyzes the hydrolysis of the adenine ring of phosphoribosyl-AMP. This chain is Phosphoribosyl-AMP cyclohydrolase, found in Ralstonia nicotianae (strain ATCC BAA-1114 / GMI1000) (Ralstonia solanacearum).